The following is a 354-amino-acid chain: Uroporphyrinogen decarboxylase (354 aa).

Residues 27-31, D77, Y154, S209, and H327 each bind substrate; that span reads RQAGR.

It belongs to the uroporphyrinogen decarboxylase family. As to quaternary structure, homodimer.

It localises to the cytoplasm. The enzyme catalyses uroporphyrinogen III + 4 H(+) = coproporphyrinogen III + 4 CO2. The protein operates within porphyrin-containing compound metabolism; protoporphyrin-IX biosynthesis; coproporphyrinogen-III from 5-aminolevulinate: step 4/4. In terms of biological role, catalyzes the decarboxylation of four acetate groups of uroporphyrinogen-III to yield coproporphyrinogen-III. This is Uroporphyrinogen decarboxylase from Shewanella frigidimarina (strain NCIMB 400).